Here is a 131-residue protein sequence, read N- to C-terminus: Small ribosomal subunit protein uS11 (131 aa).

The protein belongs to the universal ribosomal protein uS11 family. In terms of assembly, part of the 30S ribosomal subunit.

Its function is as follows. Located on the platform of the 30S subunit. This Haloquadratum walsbyi (strain DSM 16790 / HBSQ001) protein is Small ribosomal subunit protein uS11.